The following is a 488-amino-acid chain: V-type proton ATPase subunit B 1 (488 aa).

Belongs to the ATPase alpha/beta chains family. In terms of assembly, V-ATPase is a heteromultimeric enzyme composed of a peripheral catalytic V1 complex (main components: subunits A, B, C, D, E, and F) attached to an integral membrane V0 proton pore complex (main component: the proteolipid protein).

Non-catalytic subunit of the peripheral V1 complex of vacuolar ATPase. V-ATPase is responsible for acidifying a variety of intracellular compartments in eukaryotic cells. The chain is V-type proton ATPase subunit B 1 from Gossypium hirsutum (Upland cotton).